A 428-amino-acid chain; its full sequence is UPF0597 protein PBPRB0240 (428 aa).

The protein belongs to the UPF0597 family.

The polypeptide is UPF0597 protein PBPRB0240 (Photobacterium profundum (strain SS9)).